Here is a 188-residue protein sequence, read N- to C-terminus: Mitochondrial import receptor subunit TOM20-1 (188 aa).

At 1 to 164 (MDKLNFFEEI…VVKNKKSSDE (164 aa)) the chain is on the cytoplasmic side. The chain crosses the membrane as a helical span at residues 165–182 (KYIVMGWVILAIGVVACI). Over 183–188 (SFRKLR) the chain is Mitochondrial intermembrane.

The protein belongs to the Tom20 family. As to quaternary structure, forms part of the preprotein translocase complex of the outer mitochondrial membrane (TOM complex) which consists of at least 6 different proteins (TOM5, TOM6, TOM7, TOM20, TOM22/TOM9 and TOM40). Component of a mitochondrial large protein complex that contains, at least, MIC60, DGS1, TOM40, TOM20 proteins, and petC/RISP. As to expression, barely detected in roots.

The protein resides in the mitochondrion outer membrane. Its function is as follows. Central component of the receptor complex responsible for the recognition and translocation of cytosolically synthesized mitochondrial preproteins. Together with TOM22 functions as the transit peptide receptor at the surface of the mitochondrion outer membrane and facilitates the movement of preproteins into the translocation pore. In Arabidopsis thaliana (Mouse-ear cress), this protein is Mitochondrial import receptor subunit TOM20-1.